A 191-amino-acid chain; its full sequence is UPF0312 protein Shewmr7_1249 (191 aa).

The first 22 residues, 1–22 (MKKQLLAALIGGFLLAPMAASA), serve as a signal peptide directing secretion.

It belongs to the UPF0312 family. Type 1 subfamily.

The protein localises to the periplasm. This is UPF0312 protein Shewmr7_1249 from Shewanella sp. (strain MR-7).